The following is a 226-amino-acid chain: uncharacterized protein (226 aa).

It to L.innocua lin1255, lin1742 and lin2408.

This is an uncharacterized protein from Listeria innocua serovar 6a (strain ATCC BAA-680 / CLIP 11262).